The sequence spans 333 residues: Putative pectinesterase 14 (333 aa).

An N-terminal signal peptide occupies residues 1-16 (MLFFILFLSIISPIES). Residues Asn108 and Asn114 are each glycosylated (N-linked (GlcNAc...) asparagine). Position 116 (Thr116) interacts with substrate. Asn133 is a glycosylation site (N-linked (GlcNAc...) asparagine). Position 151 (Gln151) interacts with substrate. Asp174 acts as the Proton donor in catalysis. The Nucleophile role is filled by Asp195. Position 253 (Arg253) interacts with substrate. Asn302 and Asn323 each carry an N-linked (GlcNAc...) asparagine glycan.

It belongs to the pectinesterase family. Expressed in flower buds.

It is found in the secreted. The protein localises to the cell wall. It catalyses the reaction [(1-&gt;4)-alpha-D-galacturonosyl methyl ester](n) + n H2O = [(1-&gt;4)-alpha-D-galacturonosyl](n) + n methanol + n H(+). It functions in the pathway glycan metabolism; pectin degradation; 2-dehydro-3-deoxy-D-gluconate from pectin: step 1/5. Functionally, acts in the modification of cell walls via demethylesterification of cell wall pectin. The protein is Putative pectinesterase 14 (PME14) of Arabidopsis thaliana (Mouse-ear cress).